An 86-amino-acid polypeptide reads, in one-letter code: Cell division topological specificity factor (86 aa).

This sequence belongs to the MinE family.

Functionally, prevents the cell division inhibition by proteins MinC and MinD at internal division sites while permitting inhibition at polar sites. This ensures cell division at the proper site by restricting the formation of a division septum at the midpoint of the long axis of the cell. In Rhizobium johnstonii (strain DSM 114642 / LMG 32736 / 3841) (Rhizobium leguminosarum bv. viciae), this protein is Cell division topological specificity factor.